We begin with the raw amino-acid sequence, 647 residues long: 5-aminolevulinate synthase, non-specific, mitochondrial (647 aa).

The transit peptide at 1–56 (METVVRRCPFLSRVPQAFLQKAGKSLLFYAQNCPKMMEIGAKPAPRALSTSAVLCQ) directs the protein to the mitochondrion. The interval 61-112 (TPPANEKDKAAKAEVQQAPDGSQQAPDGSQQTADGTQLPSGHPSLASSQGTG) is disordered. The segment covering 79–112 (PDGSQQAPDGSQQTADGTQLPSGHPSLASSQGTG) has biased composition (polar residues). Substrate contacts are provided by Arg-224, Ser-341, and Lys-360. Pyridoxal 5'-phosphate contacts are provided by Ser-393, His-421, and Thr-449. The active site involves Lys-452. Lys-452 is subject to N6-(pyridoxal phosphate)lysine. Residues Thr-481 and Thr-482 each contribute to the pyridoxal 5'-phosphate site. Residue Thr-569 participates in substrate binding. A Hydroxyproline modification is found at Pro-583.

Belongs to the class-II pyridoxal-phosphate-dependent aminotransferase family. Homodimer. Interacts (hydroxylated form) with VHL. Pyridoxal 5'-phosphate serves as cofactor. In normoxia, is hydroxylated at Pro-583, promoting interaction with VHL, initiating ubiquitination and subsequent degradation via the proteasome. In terms of processing, ubiquitinated; in normoxia following hydroxylation and interaction with VHL, leading to its subsequent degradation via the proteasome.

The protein localises to the mitochondrion inner membrane. It carries out the reaction succinyl-CoA + glycine + H(+) = 5-aminolevulinate + CO2 + CoA. Its pathway is porphyrin-containing compound metabolism; protoporphyrin-IX biosynthesis; 5-aminolevulinate from glycine: step 1/1. In terms of biological role, catalyzes the pyridoxal 5'-phosphate (PLP)-dependent condensation of succinyl-CoA and glycine to form aminolevulinic acid (ALA), with CoA and CO2 as by-products. The polypeptide is 5-aminolevulinate synthase, non-specific, mitochondrial (ALAS1) (Bos taurus (Bovine)).